Consider the following 33-residue polypeptide: MSDIN-like toxin proprotein 1 (33 aa).

A propeptide spanning residues 1–10 (MSDINATRLP) is cleaved from the precursor. A cross-link (cyclopeptide (Ile-Pro)) is located at residues 11–18 (IIWAPVVP). Positions 19 to 33 (CISDDNDSTLTRGQR) are excised as a propeptide.

The protein belongs to the MSDIN fungal toxin family. In terms of processing, processed by the macrocyclase-peptidase enzyme POPB to yield a toxic cyclic octapeptide. POPB first removes 10 residues from the N-terminus. Conformational trapping of the remaining peptide forces the enzyme to release this intermediate rather than proceed to macrocyclization. The enzyme rebinds the remaining peptide in a different conformation and catalyzes macrocyclization of the N-terminal 8 residues.

Its function is as follows. Probable toxin that belongs to the MSDIN-like toxin family responsible for a large number of food poisoning cases and deaths. The polypeptide is MSDIN-like toxin proprotein 1 (Amanita fuliginea (East Asian brown death cap)).